The chain runs to 292 residues: ATP synthase gamma chain (292 aa).

Belongs to the ATPase gamma chain family. F-type ATPases have 2 components, CF(1) - the catalytic core - and CF(0) - the membrane proton channel. CF(1) has five subunits: alpha(3), beta(3), gamma(1), delta(1), epsilon(1). CF(0) has three main subunits: a, b and c.

The protein resides in the cell inner membrane. Functionally, produces ATP from ADP in the presence of a proton gradient across the membrane. The gamma chain is believed to be important in regulating ATPase activity and the flow of protons through the CF(0) complex. The protein is ATP synthase gamma chain of Methylobacterium sp. (strain 4-46).